A 725-amino-acid chain; its full sequence is Dolichyl-phosphate-mannose--protein mannosyltransferase 5 (725 aa).

A run of 6 helical transmembrane segments spans residues 34-54 (QFAV…LYIP), 117-137 (YLWL…LTFF), 145-165 (SVIS…VTVS), 192-212 (IPFT…LGLN), 219-239 (GLFT…EILG), and 256-276 (VVAF…IHFE). MIR domains follow at residues 303–356 (PLQV…IETK), 368–427 (QREV…IRML), and 439–495 (LIKL…VESS). Residue N409 is glycosylated (N-linked (GlcNAc...) asparagine). 4 helical membrane-spanning segments follow: residues 570–590 (IYYL…LIAI), 619–639 (FYNN…PYCL), 644–664 (LYLH…SQYL), and 673–693 (IIGG…FYEF).

This sequence belongs to the glycosyltransferase 39 family.

The protein localises to the endoplasmic reticulum membrane. It catalyses the reaction a di-trans,poly-cis-dolichyl beta-D-mannosyl phosphate + L-seryl-[protein] = 3-O-(alpha-D-mannosyl)-L-seryl-[protein] + a di-trans,poly-cis-dolichyl phosphate + H(+). The enzyme catalyses a di-trans,poly-cis-dolichyl beta-D-mannosyl phosphate + L-threonyl-[protein] = 3-O-(alpha-D-mannosyl)-L-threonyl-[protein] + a di-trans,poly-cis-dolichyl phosphate + H(+). Its pathway is protein modification; protein glycosylation. Its function is as follows. Protein mannosyltransferase (PMT) involved in hyphal morphogenesis and drug sensitivity. Transfers mannose from Dol-P-mannose to Ser or Thr residues on proteins. PMT1, PMT2 and PMT4 account for most of the protein-O-glycosylation activity, while PMT5 and PMT6 may specifically modulate a much narrower spectrum of target proteins. Required for biofilm formation. In Candida albicans (strain SC5314 / ATCC MYA-2876) (Yeast), this protein is Dolichyl-phosphate-mannose--protein mannosyltransferase 5.